The following is a 163-amino-acid chain: SsrA-binding protein (163 aa).

The segment covering 135-156 (GKKEHDKRDDTKEREWKIEKSR) has biased composition (basic and acidic residues). The interval 135 to 163 (GKKEHDKRDDTKEREWKIEKSRTMKHAAR) is disordered.

Belongs to the SmpB family.

Its subcellular location is the cytoplasm. Required for rescue of stalled ribosomes mediated by trans-translation. Binds to transfer-messenger RNA (tmRNA), required for stable association of tmRNA with ribosomes. tmRNA and SmpB together mimic tRNA shape, replacing the anticodon stem-loop with SmpB. tmRNA is encoded by the ssrA gene; the 2 termini fold to resemble tRNA(Ala) and it encodes a 'tag peptide', a short internal open reading frame. During trans-translation Ala-aminoacylated tmRNA acts like a tRNA, entering the A-site of stalled ribosomes, displacing the stalled mRNA. The ribosome then switches to translate the ORF on the tmRNA; the nascent peptide is terminated with the 'tag peptide' encoded by the tmRNA and targeted for degradation. The ribosome is freed to recommence translation, which seems to be the essential function of trans-translation. In Shewanella loihica (strain ATCC BAA-1088 / PV-4), this protein is SsrA-binding protein.